A 141-amino-acid polypeptide reads, in one-letter code: Galactose-6-phosphate isomerase subunit LacA (141 aa).

Belongs to the LacAB/RpiB family. In terms of assembly, heteromultimeric protein consisting of LacA and LacB.

The catalysed reaction is aldehydo-D-galactose 6-phosphate = keto-D-tagatose 6-phosphate. The protein operates within carbohydrate metabolism; D-galactose 6-phosphate degradation; D-tagatose 6-phosphate from D-galactose 6-phosphate: step 1/1. This chain is Galactose-6-phosphate isomerase subunit LacA, found in Streptococcus pneumoniae (strain ATCC 700669 / Spain 23F-1).